The following is a 466-amino-acid chain: tRNA-2-methylthio-N(6)-dimethylallyladenosine synthase (466 aa).

Residues 5-125 (RKLHIKSYGC…LPELLARAGR (121 aa)) enclose the MTTase N-terminal domain. The [4Fe-4S] cluster site is built by Cys-14, Cys-50, Cys-88, Cys-166, Cys-170, and Cys-173. The Radical SAM core domain occupies 152-384 (RARGVSAFVT…QSLIDSQQAA (233 aa)). The TRAM domain occupies 387 to 449 (KAAIGTVVDV…RYSLLGELVA (63 aa)).

It belongs to the methylthiotransferase family. MiaB subfamily. In terms of assembly, monomer. [4Fe-4S] cluster serves as cofactor.

Its subcellular location is the cytoplasm. The catalysed reaction is N(6)-dimethylallyladenosine(37) in tRNA + (sulfur carrier)-SH + AH2 + 2 S-adenosyl-L-methionine = 2-methylsulfanyl-N(6)-dimethylallyladenosine(37) in tRNA + (sulfur carrier)-H + 5'-deoxyadenosine + L-methionine + A + S-adenosyl-L-homocysteine + 2 H(+). Its function is as follows. Catalyzes the methylthiolation of N6-(dimethylallyl)adenosine (i(6)A), leading to the formation of 2-methylthio-N6-(dimethylallyl)adenosine (ms(2)i(6)A) at position 37 in tRNAs that read codons beginning with uridine. In Bradyrhizobium sp. (strain BTAi1 / ATCC BAA-1182), this protein is tRNA-2-methylthio-N(6)-dimethylallyladenosine synthase.